The primary structure comprises 189 residues: Crossover junction endodeoxyribonuclease RuvC (189 aa).

Residues aspartate 12, glutamate 72, and aspartate 147 contribute to the active site. Mg(2+) contacts are provided by aspartate 12, glutamate 72, and aspartate 147.

This sequence belongs to the RuvC family. Homodimer which binds Holliday junction (HJ) DNA. The HJ becomes 2-fold symmetrical on binding to RuvC with unstacked arms; it has a different conformation from HJ DNA in complex with RuvA. In the full resolvosome a probable DNA-RuvA(4)-RuvB(12)-RuvC(2) complex forms which resolves the HJ. It depends on Mg(2+) as a cofactor.

It is found in the cytoplasm. The enzyme catalyses Endonucleolytic cleavage at a junction such as a reciprocal single-stranded crossover between two homologous DNA duplexes (Holliday junction).. Its function is as follows. The RuvA-RuvB-RuvC complex processes Holliday junction (HJ) DNA during genetic recombination and DNA repair. Endonuclease that resolves HJ intermediates. Cleaves cruciform DNA by making single-stranded nicks across the HJ at symmetrical positions within the homologous arms, yielding a 5'-phosphate and a 3'-hydroxyl group; requires a central core of homology in the junction. The consensus cleavage sequence is 5'-(A/T)TT(C/G)-3'. Cleavage occurs on the 3'-side of the TT dinucleotide at the point of strand exchange. HJ branch migration catalyzed by RuvA-RuvB allows RuvC to scan DNA until it finds its consensus sequence, where it cleaves and resolves the cruciform DNA. The chain is Crossover junction endodeoxyribonuclease RuvC from Porphyromonas gingivalis (strain ATCC BAA-308 / W83).